A 411-amino-acid polypeptide reads, in one-letter code: Serine--tRNA ligase (411 aa).

L-serine is bound at residue 226–228 (TSE). An ATP-binding site is contributed by 257–259 (RKE). Glutamate 280 contributes to the L-serine binding site. 344–347 (EISS) is an ATP binding site. L-serine is bound at residue serine 379.

This sequence belongs to the class-II aminoacyl-tRNA synthetase family. Type-1 seryl-tRNA synthetase subfamily. As to quaternary structure, homodimer. The tRNA molecule binds across the dimer.

The protein localises to the cytoplasm. The catalysed reaction is tRNA(Ser) + L-serine + ATP = L-seryl-tRNA(Ser) + AMP + diphosphate + H(+). It carries out the reaction tRNA(Sec) + L-serine + ATP = L-seryl-tRNA(Sec) + AMP + diphosphate + H(+). Its pathway is aminoacyl-tRNA biosynthesis; selenocysteinyl-tRNA(Sec) biosynthesis; L-seryl-tRNA(Sec) from L-serine and tRNA(Sec): step 1/1. Catalyzes the attachment of serine to tRNA(Ser). Is also able to aminoacylate tRNA(Sec) with serine, to form the misacylated tRNA L-seryl-tRNA(Sec), which will be further converted into selenocysteinyl-tRNA(Sec). In Campylobacter jejuni (strain RM1221), this protein is Serine--tRNA ligase.